Reading from the N-terminus, the 613-residue chain is Chaperone protein DnaK (613 aa).

The segment at 578–613 (MYQSQATQGTSQNSSQNNNSQNNNGDTVDADFKESK) is disordered. Residues 580-602 (QSQATQGTSQNSSQNNNSQNNNG) show a composition bias toward low complexity.

It belongs to the heat shock protein 70 family.

Functionally, acts as a chaperone. This Picrophilus torridus (strain ATCC 700027 / DSM 9790 / JCM 10055 / NBRC 100828 / KAW 2/3) protein is Chaperone protein DnaK.